Reading from the N-terminus, the 383-residue chain is uncharacterized protein (383 aa).

The tract at residues 1 to 55 is disordered; sequence MSSKLTVNAHYSPLKDEDPLDHIDSQTALDSMETDSTGKSSLYFSKSDDPLSKDI. Residues 13–24 show a composition bias toward basic and acidic residues; it reads PLKDEDPLDHID. A compositionally biased stretch (polar residues) spans 25–44; the sequence is SQTALDSMETDSTGKSSLYF. Basic and acidic residues predominate over residues 46–55; it reads KSDDPLSKDI. The next 10 membrane-spanning stretches (helical) occupy residues 87-107, 112-132, 157-177, 179-199, 205-225, 228-248, 262-282, 299-319, 329-349, and 352-372; these read LTIF…TILN, NIIN…SLMV, FIFV…FVPV, FYQI…FVLL, LFPF…VRFE, VAPI…IESV, LIYI…VASL, FFIV…ATFT, YMIS…AFLG, and LYGN…LYTL.

This sequence belongs to the TPT transporter family.

The protein localises to the membrane. This is an uncharacterized protein from Schizosaccharomyces pombe (strain 972 / ATCC 24843) (Fission yeast).